The chain runs to 940 residues: MEQMSVTQFAGELKMPAAALLEQLKRAGVDKSSAADLLTEQDKSRLLEYLRRAHGGGEPKGKITLTRKQTTEIRATDSTGRARTVQVEVRKKRTFVKRDELLGDAASAESPLLEEELSVAGEAAGEAVAAPEPVLEAAPVEVVAEPEPVQPEPLPEPEPEPVVVEEAPVQQAAEPEPVEAAAVAAEAESPESAQPAAPRARPVSITELLSEEEIAAREREARRHRELVERQQADLRARQQREAAAKAAAEARRLDEEAKARAEQQKKEEAAKPAAKPAPGPTGTLHRPAKADDKAGKDAKRGPAREADGAKRRGIKTRGEVGGAASGNAWRGAKGGGRHGRQQDDRQTFQAPTEPIVREVHVPETITVADLAHKMSVKATEVIKTLMKMGSMVTINQVLDQETAMIVVEELGHKALAAKLDDPDAFLEETDAHKDAELLPRAPVVTVMGHVDHGKTSLLDYIRRAKVAAGEAGGITQHIGAYHVETPRGVITFLDTPGHEAFTAMRARGAKATDIVILVCAADDGVMPQTREAIHHAKAAGVPVVVAITKIDKPEANAERVKQELVSESVIPEEYGGDTMFVPVSAKTGTGVDELLEAVLLQAEVLELTAAVDAPAKGLIVEARLDKGRGPVASLLVQSGTLRKGDVLLVGATFGRIRAMLDENGKPVDEAGPSIPVEILGLSDVPAAGDEAIVLGDEKKAREIALFRQGKFRDVKLAKQQAAKLESMFEQMAEGEVKSLPLIIKADVQGSQEALAQSLAKLSNDEVRVNVIHGAVGAISESDVNLAQASGAVIIGFNTRADAGARKLAESFGVDIRYYNIIYDAVDEVKSALSGMLAPEKREEVIGMVEIRQVFTISKVGSVAGCYVLEGLVKRGSSVRLIRNHTVVWTGELESLKRFKDDVKEVKFGYECGLQLKNYNDIQVGDQLEVFEIKEVARTL.

Low complexity-rich tracts occupy residues 138–147 (APVEVVAEPE) and 161–208 (PVVV…ITEL). A disordered region spans residues 138-354 (APVEVVAEPE…DRQTFQAPTE (217 aa)). 2 stretches are compositionally biased toward basic and acidic residues: residues 214-271 (IAAR…EEAA) and 289-311 (AKAD…DGAK). The 170-residue stretch at 440–609 (PRAPVVTVMG…LLQAEVLELT (170 aa)) folds into the tr-type G domain. The segment at 449 to 456 (GHVDHGKT) is G1. 449-456 (GHVDHGKT) contacts GTP. Residues 474 to 478 (GITQH) are G2. Residues 495-498 (DTPG) are G3. Residues 495–499 (DTPGH) and 549–552 (TKID) contribute to the GTP site. The tract at residues 549–552 (TKID) is G4. Residues 585 to 587 (SAK) are G5.

This sequence belongs to the TRAFAC class translation factor GTPase superfamily. Classic translation factor GTPase family. IF-2 subfamily.

It is found in the cytoplasm. Its function is as follows. One of the essential components for the initiation of protein synthesis. Protects formylmethionyl-tRNA from spontaneous hydrolysis and promotes its binding to the 30S ribosomal subunits. Also involved in the hydrolysis of GTP during the formation of the 70S ribosomal complex. In Azoarcus sp. (strain BH72), this protein is Translation initiation factor IF-2.